We begin with the raw amino-acid sequence, 229 residues long: tRNA (guanine-N(7)-)-methyltransferase (229 aa).

S-adenosyl-L-methionine is bound by residues glutamate 62, glutamate 87, aspartate 114, and aspartate 137. Residue aspartate 137 is part of the active site. Lysine 141 contributes to the substrate binding site. An interaction with RNA region spans residues 143–148; that stretch reads KHNKRR. Substrate is bound by residues aspartate 173 and 208–211; that span reads TKFE.

Belongs to the class I-like SAM-binding methyltransferase superfamily. TrmB family.

It catalyses the reaction guanosine(46) in tRNA + S-adenosyl-L-methionine = N(7)-methylguanosine(46) in tRNA + S-adenosyl-L-homocysteine. It functions in the pathway tRNA modification; N(7)-methylguanine-tRNA biosynthesis. Catalyzes the formation of N(7)-methylguanine at position 46 (m7G46) in tRNA. In Francisella tularensis subsp. novicida (strain U112), this protein is tRNA (guanine-N(7)-)-methyltransferase.